A 467-amino-acid chain; its full sequence is Cysteine--tRNA ligase (467 aa).

A Zn(2+)-binding site is contributed by Cys28. Residues 30–40 (MTVYDYCHLGH) carry the 'HIGH' region motif. Zn(2+) contacts are provided by Cys209, His234, and Glu238. Positions 266–270 (KMSKS) match the 'KMSKS' region motif. Residue Lys269 coordinates ATP.

The protein belongs to the class-I aminoacyl-tRNA synthetase family. In terms of assembly, monomer. Zn(2+) is required as a cofactor.

The protein localises to the cytoplasm. It carries out the reaction tRNA(Cys) + L-cysteine + ATP = L-cysteinyl-tRNA(Cys) + AMP + diphosphate. This is Cysteine--tRNA ligase from Hahella chejuensis (strain KCTC 2396).